A 678-amino-acid chain; its full sequence is NADPH--cytochrome P450 reductase (678 aa).

Residues 1 to 21 (MADSNMDAGTTTSEMVAEEVS) are Lumenal-facing. Residues 22–42 (LFSTTDVILFSLIVGVMTYWF) traverse the membrane as a helical segment. The Cytoplasmic segment spans residues 43 to 678 (LFRKKKEEVP…KGRYSLDVWS (636 aa)). S63 carries the phosphoserine modification. The Flavodoxin-like domain maps to 80–224 (IIVFYGSQTG…DFITWREQFW (145 aa)). Residues 86–91 (SQTGTA), 138–141 (ATYG), 173–182 (LGNKTYEHFN), and D208 each bind FMN. Residues 279-521 (KNPFLAVVTT…YVRKSQFRLP (243 aa)) form the FAD-binding FR-type domain. Residue R298 participates in NADP(+) binding. FAD-binding positions include R424, 454–457 (RYYS), 472–474 (CAV), Y478, and 488–491 (GVAT). Residues T535, 596 to 597 (SR), 602 to 606 (KVYVQ), and D639 each bind NADP(+). Position 677 (W677) interacts with FAD.

The protein belongs to the NADPH--cytochrome P450 reductase family. In the N-terminal section; belongs to the flavodoxin family. This sequence in the C-terminal section; belongs to the flavoprotein pyridine nucleotide cytochrome reductase family. Requires FAD as cofactor. It depends on FMN as a cofactor.

It localises to the endoplasmic reticulum membrane. The catalysed reaction is 2 oxidized [cytochrome P450] + NADPH = 2 reduced [cytochrome P450] + NADP(+) + H(+). This enzyme is required for electron transfer from NADP to cytochrome P450 in microsomes. It can also provide electron transfer to heme oxygenase and cytochrome B5. The sequence is that of NADPH--cytochrome P450 reductase from Bos taurus (Bovine).